Reading from the N-terminus, the 292-residue chain is Nitrogenase iron protein (292 aa).

ATP is bound at residue 8–15 (GKGGIGKS). Cysteine 96 is a binding site for [4Fe-4S] cluster. Position 99 is an ADP-ribosylarginine; by dinitrogenase reductase ADP-ribosyltransferase (arginine 99). Cysteine 130 lines the [4Fe-4S] cluster pocket.

Belongs to the NifH/BchL/ChlL family. In terms of assembly, homodimer. Requires [4Fe-4S] cluster as cofactor. In terms of processing, the reversible ADP-ribosylation of Arg-99 inactivates the nitrogenase reductase and regulates nitrogenase activity.

The catalysed reaction is N2 + 8 reduced [2Fe-2S]-[ferredoxin] + 16 ATP + 16 H2O = H2 + 8 oxidized [2Fe-2S]-[ferredoxin] + 2 NH4(+) + 16 ADP + 16 phosphate + 6 H(+). The key enzymatic reactions in nitrogen fixation are catalyzed by the nitrogenase complex, which has 2 components: the iron protein and the molybdenum-iron protein. The chain is Nitrogenase iron protein from Synechococcus sp. (strain JA-3-3Ab) (Cyanobacteria bacterium Yellowstone A-Prime).